Reading from the N-terminus, the 339-residue chain is Lipopolysaccharide glucosyltransferase WaaO (339 aa).

UDP-binding positions include Gly-34–Phe-39 and Asp-131–Ala-132. Mg(2+)-binding residues include Asp-131 and Asp-133. 2 short sequence motifs (DXD) span residues Asp-131–Asp-133 and Asp-220–Asp-222. His-265 is a Mg(2+) binding site. His-265 to Lys-271 serves as a coordination point for UDP.

This sequence belongs to the glycosyltransferase 8 family. Mg(2+) serves as cofactor.

The catalysed reaction is UDP-glucose + lipopolysaccharide = UDP + alpha-D-glucosyl-lipopolysaccharide.. It catalyses the reaction alpha-D-Gal-(1-&gt;6)-alpha-D-Glc-(1-&gt;3)-[L-alpha-D-Hep-(1-&gt;7)]-4-O-PO3(2-)-L-alpha-D-Hep-(1-&gt;3)-4-O-PO3(2-)-L-alpha-D-Hep-(1-&gt;5)-[alpha-Kdo-(2-&gt;4)]-alpha-Kdo-(2-&gt;6)-lipid A + UDP-alpha-D-glucose = alpha-D-Glc-(1-&gt;3)-[alpha-D-Gal-(1-&gt;6)]-alpha-D-Glc-(1-&gt;3)-[L-alpha-D-Hep-(1-&gt;7)]-4-O-PO3(2-)-L-alpha-D-Hep-(1-&gt;3)-4-O-PO3(2-)-L-alpha-D-Hep-(1-&gt;5)-[alpha-Kdo-(2-&gt;4)]-alpha-Kdo-(2-&gt;6)-lipid A + UDP + H(+). It participates in bacterial outer membrane biogenesis; LPS core biosynthesis. Glucosyltransferase involved in the biosynthesis of the core oligosaccharide region of lipopolysaccharide (LPS). Catalyzes the addition of a second glucose (glucose II) to the first outer-core glucose (glucose I). In vitro, can add multiple glucose residues to its lipid acceptor. Activity does not require the branched galactose added by WaaB, but it is higher in the presence of this branched galactose. In the absence of a lipid acceptor, can hydrolyze UDP-glucose, but not UDP-galactose. The protein is Lipopolysaccharide glucosyltransferase WaaO of Escherichia coli (strain K12).